The chain runs to 339 residues: Lipoate-protein ligase A (339 aa).

A BPL/LPL catalytic domain is found at 29-217 (PKKQSILFLW…AFFQHYGMKV (189 aa)). ATP contacts are provided by residues arginine 71, 76–79 (GAVF), and lysine 135. Position 135 (lysine 135) interacts with (R)-lipoate.

This sequence belongs to the LplA family. Monomer.

It is found in the cytoplasm. The catalysed reaction is L-lysyl-[lipoyl-carrier protein] + (R)-lipoate + ATP = N(6)-[(R)-lipoyl]-L-lysyl-[lipoyl-carrier protein] + AMP + diphosphate + H(+). It participates in protein modification; protein lipoylation via exogenous pathway; protein N(6)-(lipoyl)lysine from lipoate: step 1/2. It functions in the pathway protein modification; protein lipoylation via exogenous pathway; protein N(6)-(lipoyl)lysine from lipoate: step 2/2. Functionally, catalyzes both the ATP-dependent activation of exogenously supplied lipoate to lipoyl-AMP and the transfer of the activated lipoyl onto the lipoyl domains of lipoate-dependent enzymes. The polypeptide is Lipoate-protein ligase A (Blochmanniella pennsylvanica (strain BPEN)).